The sequence spans 96 residues: Teretoxin Tgu6.1 (96 aa).

The signal sequence occupies residues 1-16 (MRPFLVFVLIVSVSLA). A propeptide spanning residues 17 to 52 (FSFEDMPNKGGDSVASITADQARGHKRNPLFPFAQR) is cleaved from the precursor.

In terms of processing, contains 3 disulfide bonds. In terms of tissue distribution, expressed by the venom duct.

The protein resides in the secreted. The recombinant protein causes paralysis to polychaete worms (Nereis virens), the natural prey of terebrid snails. The polypeptide is Teretoxin Tgu6.1 (Terebra guttata (White spotted auger snail)).